A 338-amino-acid polypeptide reads, in one-letter code: Ribosomal RNA small subunit methyltransferase H (338 aa).

Residues 53–55 (GGH), Asp72, Tyr99, Asp123, and Gln130 contribute to the S-adenosyl-L-methionine site. Disordered regions lie at residues 276-297 (EITP…PGMG) and 304-323 (TRGA…RSAP).

The protein belongs to the methyltransferase superfamily. RsmH family.

It is found in the cytoplasm. It carries out the reaction cytidine(1402) in 16S rRNA + S-adenosyl-L-methionine = N(4)-methylcytidine(1402) in 16S rRNA + S-adenosyl-L-homocysteine + H(+). Functionally, specifically methylates the N4 position of cytidine in position 1402 (C1402) of 16S rRNA. The polypeptide is Ribosomal RNA small subunit methyltransferase H (Rhodococcus jostii (strain RHA1)).